The sequence spans 120 residues: Histone H3-like centromeric protein cnp1 (120 aa).

The interval 1–26 (MAKKSLMAEPGDPIPRPRKKRYRPGT) is disordered. Positions 14–120 (IPRPRKKRYR…MQLARRIRGA (107 aa)) are H3-like.

The protein belongs to the histone H3 family. Component of centromeric nucleosomes, where DNA is wrapped around a histone octamer core. The octamer contains two molecules each of H2A, H2B, cnp1/CENPA and H4 assembled in one cnp1-H4 heterotetramer and two H2A-H2B heterodimers. Interacts with the inner kinetochore. Component of centromeric nucleosomes. Interacts with mis6. Interacts with sim4. In terms of processing, ubiquitinated. Is degraded through ubiquitin-mediated proteolysis when not protected by its association to the kinetochore.

It localises to the nucleus. It is found in the chromosome. The protein resides in the centromere. Its function is as follows. Histone H3-like nucleosomal protein that is specifically found in centromeric nucleosomes. Replaces conventional H3 in the nucleosome core of centromeric chromatin that serves as an assembly site for the inner kinetochore. Required for recruitment and assembly of kinetochore proteins, mitotic progression and chromosome segregation. May serve as an epigenetic mark that propagates centromere identity through replication and cell division. The sequence is that of Histone H3-like centromeric protein cnp1 (cnp1) from Schizosaccharomyces pombe (strain 972 / ATCC 24843) (Fission yeast).